The sequence spans 516 residues: Probable inorganic phosphate transporter 1-6 (516 aa).

At A2 the chain carries N-acetylalanine. Residues A2–A25 are Cytoplasmic-facing. Residues V26–I46 form a helical membrane-spanning segment. Over T47–S71 the chain is Extracellular. The chain crosses the membrane as a helical span at residues A72–L92. Residues G93–R100 are Cytoplasmic-facing. Residues V101 to G121 form a helical membrane-spanning segment. The Extracellular portion of the chain corresponds to R122 to C132. The chain crosses the membrane as a helical span at residues F133–M153. Residues S154 to R162 are Cytoplasmic-facing. Residues G163–V183 traverse the membrane as a helical segment. The Extracellular segment spans residues S184–A212. The chain crosses the membrane as a helical span at residues D213–W233. Over R234 to R293 the chain is Cytoplasmic. A helical transmembrane segment spans residues H294–S314. The Extracellular portion of the chain corresponds to Q315–T349. Residues I350–M370 traverse the membrane as a helical segment. Topologically, residues G371–K374 are cytoplasmic. The helical transmembrane segment at I375–H395 threads the bilayer. Residues H396 to R403 are Extracellular-facing. A helical transmembrane segment spans residues I404–T424. The Cytoplasmic portion of the chain corresponds to T425–H442. Residues G443–L463 traverse the membrane as a helical segment. The Extracellular portion of the chain corresponds to V464–N471. Residues T472–E492 form a helical membrane-spanning segment. Residues T493 to V516 lie on the Cytoplasmic side of the membrane.

The protein belongs to the major facilitator superfamily. Phosphate:H(+) symporter (TC 2.A.1.9) family. As to expression, expressed in anthers, tapetumand mature pollen and, to a lower extent, in hydathodes and vascular tissues of cotyledons of flowering plants.

Its subcellular location is the membrane. High-affinity transporter for external inorganic phosphate. The protein is Probable inorganic phosphate transporter 1-6 (PHT1-6) of Arabidopsis thaliana (Mouse-ear cress).